Consider the following 341-residue polypeptide: S-adenosylmethionine:tRNA ribosyltransferase-isomerase (341 aa).

This sequence belongs to the QueA family. Monomer.

Its subcellular location is the cytoplasm. It carries out the reaction 7-aminomethyl-7-carbaguanosine(34) in tRNA + S-adenosyl-L-methionine = epoxyqueuosine(34) in tRNA + adenine + L-methionine + 2 H(+). Its pathway is tRNA modification; tRNA-queuosine biosynthesis. Its function is as follows. Transfers and isomerizes the ribose moiety from AdoMet to the 7-aminomethyl group of 7-deazaguanine (preQ1-tRNA) to give epoxyqueuosine (oQ-tRNA). This chain is S-adenosylmethionine:tRNA ribosyltransferase-isomerase, found in Staphylococcus aureus (strain Mu3 / ATCC 700698).